The chain runs to 116 residues: Aspartate 1-decarboxylase (116 aa).

Serine 25 acts as the Schiff-base intermediate with substrate; via pyruvic acid in catalysis. Serine 25 is modified (pyruvic acid (Ser)). Threonine 57 contributes to the substrate binding site. Tyrosine 58 (proton donor) is an active-site residue. 73-75 is a binding site for substrate; the sequence is GAA.

The protein belongs to the PanD family. As to quaternary structure, heterooctamer of four alpha and four beta subunits. Requires pyruvate as cofactor. Is synthesized initially as an inactive proenzyme, which is activated by self-cleavage at a specific serine bond to produce a beta-subunit with a hydroxyl group at its C-terminus and an alpha-subunit with a pyruvoyl group at its N-terminus.

It is found in the cytoplasm. The enzyme catalyses L-aspartate + H(+) = beta-alanine + CO2. It participates in cofactor biosynthesis; (R)-pantothenate biosynthesis; beta-alanine from L-aspartate: step 1/1. Catalyzes the pyruvoyl-dependent decarboxylation of aspartate to produce beta-alanine. The protein is Aspartate 1-decarboxylase of Leptospira borgpetersenii serovar Hardjo-bovis (strain JB197).